Reading from the N-terminus, the 275-residue chain is Formamidopyrimidine-DNA glycosylase (275 aa).

Residue proline 2 is the Schiff-base intermediate with DNA of the active site. Glutamate 3 acts as the Proton donor in catalysis. The active-site Proton donor; for beta-elimination activity is lysine 58. Positions 91, 109, and 154 each coordinate DNA. The segment at 240-274 (AVYERAGLPCRVCGTPIRRLVQGQRATYYCPSCQK) adopts an FPG-type zinc-finger fold. The active-site Proton donor; for delta-elimination activity is the arginine 264.

The protein belongs to the FPG family. In terms of assembly, monomer. Zn(2+) serves as cofactor.

It catalyses the reaction Hydrolysis of DNA containing ring-opened 7-methylguanine residues, releasing 2,6-diamino-4-hydroxy-5-(N-methyl)formamidopyrimidine.. It carries out the reaction 2'-deoxyribonucleotide-(2'-deoxyribose 5'-phosphate)-2'-deoxyribonucleotide-DNA = a 3'-end 2'-deoxyribonucleotide-(2,3-dehydro-2,3-deoxyribose 5'-phosphate)-DNA + a 5'-end 5'-phospho-2'-deoxyribonucleoside-DNA + H(+). In terms of biological role, involved in base excision repair of DNA damaged by oxidation or by mutagenic agents. Acts as a DNA glycosylase that recognizes and removes damaged bases. Has a preference for oxidized purines, such as 7,8-dihydro-8-oxoguanine (8-oxoG). Has AP (apurinic/apyrimidinic) lyase activity and introduces nicks in the DNA strand. Cleaves the DNA backbone by beta-delta elimination to generate a single-strand break at the site of the removed base with both 3'- and 5'-phosphates. The protein is Formamidopyrimidine-DNA glycosylase of Bordetella petrii (strain ATCC BAA-461 / DSM 12804 / CCUG 43448).